The following is a 296-amino-acid chain: MNWITNYVRPKINSMLGRREMPENLWIKDPSTGEMVFHKDLESNQFVIPSSGHHMRIKAKDRLRFFFDNGEYTTLEAPKVPLDPLKFRDEKKYIDRLKDYRSRTGMDDAIVNGLGTIEGLPIVATVQDFSFMGGSLGMGAGEAIIQGFEKAIELKRPLVLFASSGGARMQEGILSLMQLPRTTVAVEMLKEAGLLYIVVLTNPTTGGVTASYAMLGDIHIAEPGALIGFAGPRVIEQTIREKLPEGFQSSEYLMEHGMVDMVVSRLELKATIARLLKIMTKQPANSDAPAPPEAGC.

In terms of domain architecture, CoA carboxyltransferase N-terminal spans 25–294 (LWIKDPSTGE…NSDAPAPPEA (270 aa)).

The protein belongs to the AccD/PCCB family. As to quaternary structure, acetyl-CoA carboxylase is a heterohexamer composed of biotin carboxyl carrier protein (AccB), biotin carboxylase (AccC) and two subunits each of ACCase subunit alpha (AccA) and ACCase subunit beta (AccD).

It localises to the cytoplasm. It carries out the reaction N(6)-carboxybiotinyl-L-lysyl-[protein] + acetyl-CoA = N(6)-biotinyl-L-lysyl-[protein] + malonyl-CoA. Its pathway is lipid metabolism; malonyl-CoA biosynthesis; malonyl-CoA from acetyl-CoA: step 1/1. In terms of biological role, component of the acetyl coenzyme A carboxylase (ACC) complex. Biotin carboxylase (BC) catalyzes the carboxylation of biotin on its carrier protein (BCCP) and then the CO(2) group is transferred by the transcarboxylase to acetyl-CoA to form malonyl-CoA. In Brucella ovis (strain ATCC 25840 / 63/290 / NCTC 10512), this protein is Acetyl-coenzyme A carboxylase carboxyl transferase subunit beta.